Here is a 500-residue protein sequence, read N- to C-terminus: ADP,ATP carrier protein 5 (500 aa).

11 helical membrane-spanning segments follow: residues 26-46 (LGKFIPISALMFCILFNQNIL), 62-82 (IAGFAKVYCVTPVAALFVIIY), 94-114 (IFYYLSAFFISCFILFAFVIY), 149-169 (YIVYYSLAELWPNIFYVLLFW), 184-204 (FYTLFSLFGNSSLILVGFLMM), 224-244 (ITLVQVSTTIVAIVAIICCLL), 287-307 (LWLLLICSAAFGFAINLVEAV), 328-348 (LYILWTGVAIIVMTIIGNNVM), 357-377 (AVISPVIIMVTGILFFVLIVF), 381-401 (ILSLFDGAILMSPLALAVSIG), and 469-489 (SISPILMVVFTFVCFAWIYAV).

The protein belongs to the ADP/ATP translocase tlc family.

Its subcellular location is the cell membrane. Its function is as follows. Provides the rickettsial cell with host ATP in exchange for rickettsial ADP. This is an obligate exchange system. This energy acquiring activity is an important component of rickettsial parasitism. The chain is ADP,ATP carrier protein 5 (tlcE) from Rickettsia typhi (strain ATCC VR-144 / Wilmington).